The following is a 382-amino-acid chain: Succinyl-diaminopimelate desuccinylase (382 aa).

Histidine 73 serves as a coordination point for Zn(2+). Aspartate 75 is a catalytic residue. Aspartate 106 is a Zn(2+) binding site. Residue glutamate 140 is the Proton acceptor of the active site. Residues glutamate 141, glutamate 169, and histidine 355 each coordinate Zn(2+).

It belongs to the peptidase M20A family. DapE subfamily. As to quaternary structure, homodimer. Zn(2+) is required as a cofactor. Requires Co(2+) as cofactor.

The enzyme catalyses N-succinyl-(2S,6S)-2,6-diaminopimelate + H2O = (2S,6S)-2,6-diaminopimelate + succinate. The protein operates within amino-acid biosynthesis; L-lysine biosynthesis via DAP pathway; LL-2,6-diaminopimelate from (S)-tetrahydrodipicolinate (succinylase route): step 3/3. Functionally, catalyzes the hydrolysis of N-succinyl-L,L-diaminopimelic acid (SDAP), forming succinate and LL-2,6-diaminopimelate (DAP), an intermediate involved in the bacterial biosynthesis of lysine and meso-diaminopimelic acid, an essential component of bacterial cell walls. This is Succinyl-diaminopimelate desuccinylase from Leptothrix cholodnii (strain ATCC 51168 / LMG 8142 / SP-6) (Leptothrix discophora (strain SP-6)).